The chain runs to 247 residues: Osmotin-like protein OSML81 (247 aa).

The N-terminal stretch at 1 to 21 (MGYLRSSFIFSLLAFVTYTYA) is a signal peptide. Intrachain disulfides connect Cys30–Cys225, Cys72–Cys82, Cys87–Cys93, Cys141–Cys213, Cys146–Cys196, Cys154–Cys164, Cys168–Cys177, and Cys178–Cys183.

The protein belongs to the thaumatin family.

The protein is Osmotin-like protein OSML81 of Solanum commersonii (Commerson's wild potato).